Consider the following 1052-residue polypeptide: MQVMPPTPGGGPSRLFILRPVATTLFMIAILLAGIIGYRALPVSALPEVDYPTIQVVTLYPGASPDVVTSSITAPLERQFGQMSGLKQMASQSSGGASVITLQFQLTLPLDVAEQEVQAAINAATNLLPSDLPYPPIYNKVNPADPPILTLAVTATAIPMTQVEDMVETRIAQKISQVTGVGLVTLSGGQRPAVRVKLNAPAVAALGLDSETIRTAISNANVNSAKGSLDGPTRSVTLSANDQMKSAEEYRDLIIAYQNGAPIRLQDVATIEQGAENNKLAAWANTQSAIVLNIQRQPGVNVIATADSIREMLPELIKSLPKSVDVKVLTDRTSTIRASVNDVQFELLLAIALVVMVIYLFLRNAAATIIPSIAVPLSLVGTFAAMYFLGFSINNLTLMALTIATGFVVDDAIVVIENISRYIEKGEKPLDAALKGAGEIGFTIISLTFSLIAVLIPLLFMEDIVGRLFREFAVTLAVAILISAVVSLTLTPMMCARMLSYESLRKQNRLSRASEKFFDWVIAHYAVALKKVLNHPWLTLSVAFSTLVLTVILYLLIPKGFFPLQDNGLIQGTLEAPQSVSFSNMAERQQQVAAIILKDPAVESLTSFVGVDGTNATLNNGRLQINLKPLSERDDRIPQIITRLQESVSGVPGIKLYLQPVQDLTIDTQLSRTQYQFTLQATSLEELSTWVPKLVNELQQKAPFQDVTSDWQDQGLVAFVNVDRDSASRLGITMAAIDNALYNAFGQRLISTIYTQSNQYRVVLEHDVQATPGLAAFNDIRLTGSDGKGVPLNSIATIEERFGPLSINHLNQFPSATVSFNLAQGYSLGEAVAAVTLAEKEIQLPADITTRFQGSTLAFQAALGSTLWLIIAAIVAMYIVLGVLYESFIHPITILSTLPTAGVGALLALMLTGNELDVIAIIGIILLIGIVKKNAIMMIDFALAAERDQGMTPYDAIYQACLLRFRPILMTTLAALFGALPLMLSTGVGAELRQPLGVCMVGGLIVSQVLTLFTTPVIYLLFDKLARNTRGKNRHRDEDIDSSELLNGQEPQ.

11 helical membrane passes run 15–37, 345–362, 367–389, 396–418, 438–460, 472–494, 535–557, 867–889, 909–931, 968–990, and 1000–1022; these read LFIL…GIIG, FELL…YLFL, ATII…MYFL, LTLM…VIEN, GEIG…PLLF, FAVT…TPMM, HPWL…YLLI, LWLI…ESFI, LMLT…IGIV, ILMT…GVGA, and MVGG…YLLF. Positions 1032-1052 are disordered; the sequence is KNRHRDEDIDSSELLNGQEPQ.

This sequence belongs to the resistance-nodulation-cell division (RND) (TC 2.A.6) family. MdtB subfamily. In terms of assembly, part of a tripartite efflux system composed of MdtA, MdtB and MdtC. MdtB forms a heteromultimer with MdtC.

It localises to the cell inner membrane. The sequence is that of Multidrug resistance protein MdtB from Yersinia pseudotuberculosis serotype I (strain IP32953).